The primary structure comprises 230 residues: uncharacterized protein (230 aa).

The disordered stretch occupies residues 118–195; the sequence is LLDEILPKEP…SKREMERLER (78 aa). The segment covering 136-146 has biased composition (basic residues); sequence QKKKEKRAALK. Composition is skewed to basic and acidic residues over residues 160–170 and 179–195; these read ETDLYGDRDSF and QRSE…RLER.

This is an uncharacterized protein from Schizosaccharomyces pombe (strain 972 / ATCC 24843) (Fission yeast).